We begin with the raw amino-acid sequence, 327 residues long: Glycerol-3-phosphate dehydrogenase [NAD(P)+] (327 aa).

Trp13, His33, and Lys102 together coordinate NADPH. Sn-glycerol 3-phosphate is bound by residues Lys102, Gly130, and Ser132. An NADPH-binding site is contributed by Ala134. The sn-glycerol 3-phosphate site is built by Lys185, Asp238, Ser248, Arg249, and Asn250. Lys185 functions as the Proton acceptor in the catalytic mechanism. Residue Arg249 participates in NADPH binding. Glu275 is an NADPH binding site.

Belongs to the NAD-dependent glycerol-3-phosphate dehydrogenase family.

It localises to the cytoplasm. It carries out the reaction sn-glycerol 3-phosphate + NAD(+) = dihydroxyacetone phosphate + NADH + H(+). The catalysed reaction is sn-glycerol 3-phosphate + NADP(+) = dihydroxyacetone phosphate + NADPH + H(+). The protein operates within membrane lipid metabolism; glycerophospholipid metabolism. Catalyzes the reduction of the glycolytic intermediate dihydroxyacetone phosphate (DHAP) to sn-glycerol 3-phosphate (G3P), the key precursor for phospholipid synthesis. This chain is Glycerol-3-phosphate dehydrogenase [NAD(P)+], found in Vesicomyosocius okutanii subsp. Calyptogena okutanii (strain HA).